Consider the following 128-residue polypeptide: MISVGQQIIFISSGAALGALSRWGLGLLLNPLFSAFSLGTLVANYLGCLIIGVFLAFFWQYPQCSAEWRLFFVTGFLGSLTTFSTFSAEVIENLIQQKWLAGLMLASGHLLGCLLFTALGVFIWRYWQ.

4 consecutive transmembrane segments (helical) span residues 8–28, 38–58, 71–91, and 103–123; these read IIFI…LGLL, LGTL…LAFF, FFVT…AEVI, and LMLA…GVFI. Na(+) is bound by residues glycine 78 and threonine 81.

It belongs to the fluoride channel Fluc/FEX (TC 1.A.43) family.

It localises to the cell inner membrane. The enzyme catalyses fluoride(in) = fluoride(out). Na(+) is not transported, but it plays an essential structural role and its presence is essential for fluoride channel function. Its function is as follows. Fluoride-specific ion channel. Important for reducing fluoride concentration in the cell, thus reducing its toxicity. The protein is Fluoride-specific ion channel FluC of Pasteurella multocida (strain Pm70).